A 160-amino-acid polypeptide reads, in one-letter code: uncharacterized protein (160 aa).

A helical membrane pass occupies residues 8–28 (LLFILVFISGFILFTVYSYTA).

It is found in the membrane. This is an uncharacterized protein from Escherichia coli (strain K12).